The primary structure comprises 251 residues: Imidazole glycerol phosphate synthase subunit HisF (251 aa).

Catalysis depends on residues Asp11 and Asp130.

It belongs to the HisA/HisF family. In terms of assembly, heterodimer of HisH and HisF.

It localises to the cytoplasm. It catalyses the reaction 5-[(5-phospho-1-deoxy-D-ribulos-1-ylimino)methylamino]-1-(5-phospho-beta-D-ribosyl)imidazole-4-carboxamide + L-glutamine = D-erythro-1-(imidazol-4-yl)glycerol 3-phosphate + 5-amino-1-(5-phospho-beta-D-ribosyl)imidazole-4-carboxamide + L-glutamate + H(+). Its pathway is amino-acid biosynthesis; L-histidine biosynthesis; L-histidine from 5-phospho-alpha-D-ribose 1-diphosphate: step 5/9. IGPS catalyzes the conversion of PRFAR and glutamine to IGP, AICAR and glutamate. The HisF subunit catalyzes the cyclization activity that produces IGP and AICAR from PRFAR using the ammonia provided by the HisH subunit. In Chlorobium phaeovibrioides (strain DSM 265 / 1930) (Prosthecochloris vibrioformis (strain DSM 265)), this protein is Imidazole glycerol phosphate synthase subunit HisF.